A 211-amino-acid chain; its full sequence is Cytochrome c biogenesis ATP-binding export protein CcmA (211 aa).

The ABC transporter domain occupies 8-210 (LEAKNLQCER…EVRRIQLGAV (203 aa)). 40 to 47 (GPNGAGKT) contacts ATP.

It belongs to the ABC transporter superfamily. CcmA exporter (TC 3.A.1.107) family. The complex is composed of two ATP-binding proteins (CcmA) and two transmembrane proteins (CcmB).

The protein resides in the cell inner membrane. It carries out the reaction heme b(in) + ATP + H2O = heme b(out) + ADP + phosphate + H(+). Functionally, part of the ABC transporter complex CcmAB involved in the biogenesis of c-type cytochromes; once thought to export heme, this seems not to be the case, but its exact role is uncertain. Responsible for energy coupling to the transport system. This is Cytochrome c biogenesis ATP-binding export protein CcmA from Hahella chejuensis (strain KCTC 2396).